The primary structure comprises 426 residues: UPF0229 protein YeaH (426 aa).

Basic and acidic residues predominate over residues 78–92 (GNDHFIQNDRIERPQ). Positions 78-108 (GNDHFIQNDRIERPQDGGGSGSGNGQASQDG) are disordered.

The protein belongs to the UPF0229 family.

The polypeptide is UPF0229 protein YeaH (Salmonella arizonae (strain ATCC BAA-731 / CDC346-86 / RSK2980)).